The following is a 310-amino-acid chain: Phosphoribosylaminoimidazole-succinocarboxamide synthase (310 aa).

Belongs to the SAICAR synthetase family.

The catalysed reaction is 5-amino-1-(5-phospho-D-ribosyl)imidazole-4-carboxylate + L-aspartate + ATP = (2S)-2-[5-amino-1-(5-phospho-beta-D-ribosyl)imidazole-4-carboxamido]succinate + ADP + phosphate + 2 H(+). The protein operates within purine metabolism; IMP biosynthesis via de novo pathway; 5-amino-1-(5-phospho-D-ribosyl)imidazole-4-carboxamide from 5-amino-1-(5-phospho-D-ribosyl)imidazole-4-carboxylate: step 1/2. This chain is Phosphoribosylaminoimidazole-succinocarboxamide synthase, found in Stenotrophomonas maltophilia (strain K279a).